Here is a 1090-residue protein sequence, read N- to C-terminus: Exocyst complex component SEC5B (1090 aa).

A compositionally biased stretch (acidic residues) spans 1–12 (MSSSDDLDEDEL). Residues 1–126 (MSSSDDLDED…ARKEDDRAWD (126 aa)) form a disordered region. Over residues 23-46 (RDVTYQKPPSANSRKPVTNLVQQP) the composition is skewed to polar residues. The span at 52–62 (AAAPPSKGGAK) shows a compositional bias: low complexity. Positions 96 to 109 (GGGGDGGGGRGRGG) are enriched in gly residues. Residues 110–126 (SGKERGRARKEDDRAWD) show a composition bias toward basic and acidic residues. Phosphoserine is present on serine 179. The segment covering 486 to 502 (VQLSDDTSSMEDNQVQV) has biased composition (polar residues). Disordered regions lie at residues 486-511 (VQLS…ESAR), 984-1013 (ETVE…QSSV), and 1055-1090 (PVAK…PRRR). The segment covering 999–1010 (RGSEDAISDDKQ) has biased composition (basic and acidic residues). Over residues 1062 to 1071 (SRTSTDSPSR) the composition is skewed to polar residues.

It belongs to the SEC5 family. The exocyst complex is composed of SEC3, SEC5, SEC6, SEC8, SEC10, EXO70A1 and EXO84B.

Its function is as follows. Component of the exocyst complex involved in the docking of exocytic vesicles with fusion sites on the plasma membrane during regulated or polarized secretion. Involved in polarized cell growth and organ morphogenesis. During cytokinesis, involved in cell plate initiation, cell plate maturation and formation of new primary cell wall. This Arabidopsis thaliana (Mouse-ear cress) protein is Exocyst complex component SEC5B (SEC5B).